Here is a 533-residue protein sequence, read N- to C-terminus: DNA-directed RNA polymerase III subunit RPC3 (533 aa).

The residue at position 194 (Ser-194) is a Phosphoserine. The disordered stretch occupies residues 197-230; that stretch reads GKGKRRRSSDEDATGEPKAKRPKQTTDNKEPIPD. The span at 211-228 shows a compositional bias: basic and acidic residues; the sequence is GEPKAKRPKQTTDNKEPI.

It belongs to the eukaryotic RPC3/POLR3C RNA polymerase subunit family. In terms of assembly, component of the RNA polymerase III complex consisting of 17 subunits: a ten-subunit horseshoe-shaped catalytic core composed of POLR3A/RPC1, POLR3B/RPC2, POLR1C/RPAC1, POLR1D/RPAC2, POLR3K/RPC10, POLR2E/RPABC1, POLR2F/RPABC2, POLR2H/RPABC3, POLR2K/RPABC4 and POLR2L/RPABC5; a mobile stalk composed of two subunits POLR3H/RPC8 and CRCP/RPC9, protruding from the core and functioning primarily in transcription initiation; and additional subunits homologous to general transcription factors of the RNA polymerase II machinery, POLR3C/RPC3-POLR3F/RPC6-POLR3G/RPC7 heterotrimer required for transcription initiation and POLR3D/RPC4-POLR3E/RPC5 heterodimer involved in both transcription initiation and termination. Directly interacts with POLR3G/RPC7 and POLR3GL. Directly interacts with POLR3F/RPC6. Interacts with GTF3C4. As part of the RNA polymerase III complex, interacts with PKP2.

It localises to the nucleus. Functionally, DNA-dependent RNA polymerase catalyzes the transcription of DNA into RNA using the four ribonucleoside triphosphates as substrates. Specific peripheric component of RNA polymerase III (Pol III) which synthesizes small non-coding RNAs including 5S rRNA, snRNAs, tRNAs and miRNAs from at least 500 distinct genomic loci. Part of POLR3C/RPC3-POLR3F/RPC6-POLR3G/RPC7 heterotrimer, coordinates the dynamics of Pol III stalk and clamp modules during the transition from apo to elongation state. Pol III plays a key role in sensing and limiting infection by intracellular bacteria and DNA viruses. Acts as a nuclear and cytosolic DNA sensor involved in innate immune response. Can sense non-self dsDNA that serves as template for transcription into dsRNA. The non-self RNA polymerase III transcripts, such as Epstein-Barr virus-encoded RNAs (EBERs) induce type I interferon and NF-kappa-B through the RIG-I pathway. Preferentially binds single-stranded DNA (ssDNA) in a sequence-independent manner. In Bos taurus (Bovine), this protein is DNA-directed RNA polymerase III subunit RPC3 (POLR3C).